The sequence spans 286 residues: UPF0761 membrane protein KPK_5501 (286 aa).

7 consecutive transmembrane segments (helical) span residues 44–64, 74–94, 104–124, 140–160, 183–203, 210–230, and 244–264; these read LLSL…FPMF, FIFA…IEQF, VGAF…DSAL, FAVY…SLAI, LFPL…VPTT, AVIG…AFAL, and VISV…IVLL.

This sequence belongs to the UPF0761 family.

It is found in the cell inner membrane. The polypeptide is UPF0761 membrane protein KPK_5501 (Klebsiella pneumoniae (strain 342)).